Consider the following 108-residue polypeptide: Dormancy-associated protein homolog 1 (108 aa).

The segment at 28 to 59 (DIKGVGEGSSSKTVAAVAGSPGTPTTPGSARK) is disordered. Phosphoserine is present on Ser47. The residue at position 50 (Thr50) is a Phosphothreonine.

This sequence belongs to the DRM1/ARP family. Expressed mainly in the low bolt.

In Arabidopsis thaliana (Mouse-ear cress), this protein is Dormancy-associated protein homolog 1.